Here is a 215-residue protein sequence, read N- to C-terminus: Heart- and neural crest derivatives-expressed protein 1 (215 aa).

Disordered regions lie at residues 53-109 (APDF…RTES) and 169-202 (VDGGRESKRKRELQQHEGFPPALGPGEKRIKGRT). Residues 65–75 (AAAAAATYGPD) are compositionally biased toward low complexity. A compositionally biased stretch (basic residues) spans 92–104 (LGRRKGSGPKKER). Positions 94–146 (RRKGSGPKKERRRTESINSAFAELRECIPNVPADTKLSKIKTLRLATSYIAYL) constitute a bHLH domain. Phosphothreonine; by PLK4 is present on Thr107. Ser109 is subject to Phosphoserine; by PLK4.

As to quaternary structure, efficient DNA binding requires dimerization with another bHLH protein. Forms homodimers and heterodimers with TCF3 gene products E12 and E47, HAND2 and HEY1, HEY2 and HEYL (hairy-related transcription factors). Interacts with MDFIC. Interacts with SOX15; the interaction enhances HAND1-induced differentiation of trophoblast giant cells. Phosphorylation by PLK4 disrupts the interaction with MDFIC and leads to translocation into the nucleoplasm, allowing dimerization and transcription factor activity.

It is found in the nucleus. The protein resides in the nucleoplasm. It localises to the nucleolus. Functionally, transcription factor that plays an essential role in both trophoblast giant cell differentiation and in cardiac morphogenesis. Binds the DNA sequence 5'-NRTCTG-3' (non-canonical E-box). Acts as a transcriptional repressor of SOX15. In the adult, could be required for ongoing expression of cardiac-specific genes. The sequence is that of Heart- and neural crest derivatives-expressed protein 1 (HAND1) from Oryctolagus cuniculus (Rabbit).